We begin with the raw amino-acid sequence, 581 residues long: Phosphoglucomutase, cytoplasmic (581 aa).

Residues 1–11 are compositionally biased toward basic and acidic residues; that stretch reads MVFSVAKKDTT. The tract at residues 1–20 is disordered; it reads MVFSVAKKDTTPYEGQKPGT. 2 residues coordinate alpha-D-glucose 1,6-bisphosphate: arginine 24 and serine 123. Catalysis depends on serine 123, which acts as the Phosphoserine intermediate. The Mg(2+) site is built by serine 123, aspartate 298, aspartate 300, and aspartate 302. Serine 123 is modified (phosphoserine). The alpha-D-glucose 1,6-bisphosphate site is built by aspartate 302, arginine 303, threonine 366, glutamate 385, serine 387, and lysine 398.

This sequence belongs to the phosphohexose mutase family. As to quaternary structure, monomer. Requires Mg(2+) as cofactor.

The protein localises to the cytoplasm. It catalyses the reaction alpha-D-glucose 1-phosphate = alpha-D-glucose 6-phosphate. The enzyme catalyses O-phospho-L-seryl-[protein] + alpha-D-glucose 1-phosphate = alpha-D-glucose 1,6-bisphosphate + L-seryl-[protein]. The catalysed reaction is alpha-D-glucose 1,6-bisphosphate + L-seryl-[protein] = O-phospho-L-seryl-[protein] + alpha-D-glucose 6-phosphate. Catalyzes the reversible isomerization of alpha-D-glucose 1-phosphate to alpha-D-glucose 6-phosphate. The mechanism proceeds via the intermediate compound alpha-D-glucose 1,6-bisphosphate. This enzyme participates in both the breakdown and synthesis of glucose. This Bromus inermis (Smooth brome grass) protein is Phosphoglucomutase, cytoplasmic (PGM1).